The chain runs to 378 residues: Glutamate 5-kinase (378 aa).

Lysine 19 serves as a coordination point for ATP. Substrate is bound by residues serine 59, aspartate 146, and asparagine 158. Threonine 178–aspartate 179 is an ATP binding site. In terms of domain architecture, PUA spans arginine 285–threonine 363.

This sequence belongs to the glutamate 5-kinase family.

The protein resides in the cytoplasm. The enzyme catalyses L-glutamate + ATP = L-glutamyl 5-phosphate + ADP. It functions in the pathway amino-acid biosynthesis; L-proline biosynthesis; L-glutamate 5-semialdehyde from L-glutamate: step 1/2. Catalyzes the transfer of a phosphate group to glutamate to form L-glutamate 5-phosphate. This Polaromonas sp. (strain JS666 / ATCC BAA-500) protein is Glutamate 5-kinase.